The following is a 101-amino-acid chain: MNQLKKSFSPTEGKKDQNNLINDPQKNKQKKQKKLVDMEGLVTHNLSNGKFRLKLENGVEVIGHLSGKIRQNRIKIVVGDKVTVELSPYDLTKGRITYRHR.

Polar residues predominate over residues 1-10; that stretch reads MNQLKKSFSP. The tract at residues 1 to 35 is disordered; it reads MNQLKKSFSPTEGKKDQNNLINDPQKNKQKKQKKL. One can recognise an S1-like domain in the interval 26-101; that stretch reads KNKQKKQKKL…TKGRITYRHR (76 aa).

It belongs to the IF-1 family. As to quaternary structure, component of the 30S ribosomal translation pre-initiation complex which assembles on the 30S ribosome in the order IF-2 and IF-3, IF-1 and N-formylmethionyl-tRNA(fMet); mRNA recruitment can occur at any time during PIC assembly.

The protein resides in the plastid. It is found in the chloroplast. One of the essential components for the initiation of protein synthesis. Stabilizes the binding of IF-2 and IF-3 on the 30S subunit to which N-formylmethionyl-tRNA(fMet) subsequently binds. Helps modulate mRNA selection, yielding the 30S pre-initiation complex (PIC). Upon addition of the 50S ribosomal subunit IF-1, IF-2 and IF-3 are released leaving the mature 70S translation initiation complex. The chain is Translation initiation factor IF-1, chloroplastic from Tetradesmus obliquus (Green alga).